Reading from the N-terminus, the 348-residue chain is Protein RecA (348 aa).

Residue 71 to 78 (GVESSGKT) coordinates ATP.

It belongs to the RecA family.

Its subcellular location is the cytoplasm. In terms of biological role, can catalyze the hydrolysis of ATP in the presence of single-stranded DNA, the ATP-dependent uptake of single-stranded DNA by duplex DNA, and the ATP-dependent hybridization of homologous single-stranded DNAs. It interacts with LexA causing its activation and leading to its autocatalytic cleavage. The chain is Protein RecA from Aquifex pyrophilus.